Here is a 330-residue protein sequence, read N- to C-terminus: Aspartate--ammonia ligase (330 aa).

This sequence belongs to the class-II aminoacyl-tRNA synthetase family. AsnA subfamily.

It is found in the cytoplasm. The enzyme catalyses L-aspartate + NH4(+) + ATP = L-asparagine + AMP + diphosphate + H(+). Its pathway is amino-acid biosynthesis; L-asparagine biosynthesis; L-asparagine from L-aspartate (ammonia route): step 1/1. The chain is Aspartate--ammonia ligase from Escherichia coli O81 (strain ED1a).